The primary structure comprises 476 residues: Bifunctional protein GlmU (476 aa).

Residues 1–235 are pyrophosphorylase; it reads MTALDIIIMA…ALQVAGVNSP (235 aa). UDP-N-acetyl-alpha-D-glucosamine is bound by residues Lys-23, Gln-81, 86 to 87, 108 to 110, Gly-145, Glu-160, and Asn-233; these read GT and SGD. Asp-110 is a Mg(2+) binding site. Asn-233 contacts Mg(2+). The linker stretch occupies residues 236–256; sequence AQLAELERAHQRAQAAALMEQ. The N-acetyltransferase stretch occupies residues 257–476; that stretch reads GVRLADPARF…WKRPAKQAKG (220 aa). Positions 351 and 369 each coordinate UDP-N-acetyl-alpha-D-glucosamine. Residue His-381 is the Proton acceptor of the active site. UDP-N-acetyl-alpha-D-glucosamine contacts are provided by Tyr-384 and Asn-395. Residues Ala-398, 404 to 405, Ser-423, Gly-441, and Arg-458 each bind acetyl-CoA; that span reads NY.

It in the N-terminal section; belongs to the N-acetylglucosamine-1-phosphate uridyltransferase family. The protein in the C-terminal section; belongs to the transferase hexapeptide repeat family. Homotrimer. Requires Mg(2+) as cofactor.

Its subcellular location is the cytoplasm. The catalysed reaction is alpha-D-glucosamine 1-phosphate + acetyl-CoA = N-acetyl-alpha-D-glucosamine 1-phosphate + CoA + H(+). The enzyme catalyses N-acetyl-alpha-D-glucosamine 1-phosphate + UTP + H(+) = UDP-N-acetyl-alpha-D-glucosamine + diphosphate. The protein operates within nucleotide-sugar biosynthesis; UDP-N-acetyl-alpha-D-glucosamine biosynthesis; N-acetyl-alpha-D-glucosamine 1-phosphate from alpha-D-glucosamine 6-phosphate (route II): step 2/2. It participates in nucleotide-sugar biosynthesis; UDP-N-acetyl-alpha-D-glucosamine biosynthesis; UDP-N-acetyl-alpha-D-glucosamine from N-acetyl-alpha-D-glucosamine 1-phosphate: step 1/1. Its pathway is bacterial outer membrane biogenesis; LPS lipid A biosynthesis. Its function is as follows. Catalyzes the last two sequential reactions in the de novo biosynthetic pathway for UDP-N-acetylglucosamine (UDP-GlcNAc). The C-terminal domain catalyzes the transfer of acetyl group from acetyl coenzyme A to glucosamine-1-phosphate (GlcN-1-P) to produce N-acetylglucosamine-1-phosphate (GlcNAc-1-P), which is converted into UDP-GlcNAc by the transfer of uridine 5-monophosphate (from uridine 5-triphosphate), a reaction catalyzed by the N-terminal domain. This is Bifunctional protein GlmU from Acidovorax ebreus (strain TPSY) (Diaphorobacter sp. (strain TPSY)).